Consider the following 629-residue polypeptide: Polyadenylate-binding protein, cytoplasmic and nuclear (629 aa).

The segment at 1 to 47 (MTLENKAEASPATKEETTTEAAPAEGEAKTESSEEKGSKEDQGDNAS) is disordered. Over residues 26–42 (GEAKTESSEEKGSKEDQ) the composition is skewed to basic and acidic residues. RRM domains follow at residues 46–124 (ASLY…WSQR), 134–211 (GNIY…PHVP), 227–304 (TNVF…RAKK), and 330–407 (VNLY…LAQR). A disordered region spans residues 465–543 (GANPQMMMRP…RRKDGESRVA (79 aa)). Composition is skewed to low complexity over residues 493–506 (MYGA…QGGF) and 514–531 (GGQP…QFRG). One can recognise a PABC domain in the interval 542-624 (VADSISNALE…AITAYNEYLN (83 aa)).

It belongs to the polyadenylate-binding protein type-1 family.

The protein localises to the cytoplasm. It localises to the nucleus. Its function is as follows. Binds the poly(A) tail of mRNA. Appears to be an important mediator of the multiple roles of the poly(A) tail in mRNA biogenesis, stability and translation. In the nucleus, involved in both mRNA cleavage and polyadenylation. Is also required for efficient mRNA export to the cytoplasm. Acts in concert with a poly(A)-specific nuclease (PAN) to affect poly(A) tail shortening, which may occur concomitantly with either nucleocytoplasmic mRNA transport or translational initiation. In the cytoplasm, stimulates translation initiation and regulates mRNA decay through translation termination-coupled poly(A) shortening, probably mediated by PAN. The protein is Polyadenylate-binding protein, cytoplasmic and nuclear (PAB1) of Yarrowia lipolytica (strain CLIB 122 / E 150) (Yeast).